The sequence spans 61 residues: Metallothionein-1C (61 aa).

The tract at residues 1-29 is beta; that stretch reads MDPNCSCSTGSSCSCAGSCTCKACRCPSC. Positions 5, 7, 13, 15, 19, 21, 24, 26, 29, 33, 34, 36, 37, 41, 44, 48, 50, 57, 59, and 60 each coordinate a divalent metal cation. The interval 30–61 is alpha; it reads KKSCCSCCPVGCAKCAQGCICKGASDKCSCCA.

The protein belongs to the metallothionein superfamily. Type 1 family.

In terms of biological role, metallothioneins have a high content of cysteine residues that bind various heavy metals; these proteins are transcriptionally regulated by both heavy metals and glucocorticoids. The protein is Metallothionein-1C (MT1C) of Ovis aries (Sheep).